Reading from the N-terminus, the 104-residue chain is N(4)-acetylcytidine amidohydrolase (104 aa).

The ASCH domain maps to 6-96 (ITFYQRFEAD…TIYPNEHESW (91 aa)). The Proton acceptor role is filled by lysine 21. Threonine 24 acts as the Nucleophile in catalysis. The Proton donor role is filled by glutamate 74.

This sequence belongs to the N(4)-acetylcytidine amidohydrolase family.

It catalyses the reaction N(4)-acetylcytidine + H2O = cytidine + acetate + H(+). The enzyme catalyses N(4)-acetyl-2'-deoxycytidine + H2O = 2'-deoxycytidine + acetate + H(+). The catalysed reaction is N(4)-acetylcytosine + H2O = cytosine + acetate + H(+). Functionally, catalyzes the hydrolysis of N(4)-acetylcytidine (ac4C). In Haemophilus influenzae (strain 86-028NP), this protein is N(4)-acetylcytidine amidohydrolase.